A 152-amino-acid chain; its full sequence is Deoxyuridine 5'-triphosphate nucleotidohydrolase (152 aa).

Substrate contacts are provided by residues 71–73, Asn84, 88–90, and Met98; these read RSG and LID.

The protein belongs to the dUTPase family. Mg(2+) serves as cofactor.

It carries out the reaction dUTP + H2O = dUMP + diphosphate + H(+). It functions in the pathway pyrimidine metabolism; dUMP biosynthesis; dUMP from dCTP (dUTP route): step 2/2. Functionally, this enzyme is involved in nucleotide metabolism: it produces dUMP, the immediate precursor of thymidine nucleotides and it decreases the intracellular concentration of dUTP so that uracil cannot be incorporated into DNA. The chain is Deoxyuridine 5'-triphosphate nucleotidohydrolase from Shewanella pealeana (strain ATCC 700345 / ANG-SQ1).